The chain runs to 277 residues: Adaptin ear-binding coat-associated protein 1 (277 aa).

Positions Gly-164–Phe-277 are disordered. Residues Leu-187–Ser-201 show a composition bias toward pro residues. Thr-211 is modified (phosphothreonine). The segment covering Ser-222–Pro-234 has biased composition (low complexity). Positions Ala-235 to Ala-245 are enriched in pro residues. 2 short sequence motifs (WXXF motif) span residues Trp-254–Phe-257 and Trp-274–Phe-277. Positions Ser-258–Phe-277 are enriched in polar residues.

This sequence belongs to the NECAP family. Interacts with AP1G1 and AP2A1 components of the adapter protein complexes AP-1 and AP-2. Interacts with the GAE domain proteins GGA1, GGA2 and GGA3. Interacts with AP2A2. In terms of tissue distribution, expressed predominantly in brain (at protein level).

The protein resides in the cytoplasmic vesicle. It is found in the clathrin-coated vesicle membrane. The protein localises to the cell membrane. Its function is as follows. Involved in endocytosis. The protein is Adaptin ear-binding coat-associated protein 1 (Necap1) of Rattus norvegicus (Rat).